A 609-amino-acid chain; its full sequence is Beta-(1--&gt;2)glucan export ATP-binding/permease protein NdvA (609 aa).

Residues 21-311 enclose the ABC transmembrane type-1 domain; the sequence is GWILAGANLL…VVSFINSVFM (291 aa). 6 helical membrane-spanning segments follow: residues 22–42, 68–88, 146–166, 167–187, 248–268, and 285–305; these read WILAGANLLLAGAQFAEPVLF, LLAVWAAFGLFTILCGVTVAL, EHFAAMMSLVVLLPLSLYINW, RLAILLFALCIVFTMLTTLVV, WWAVVTVMTRASTTITILAIF, and IVMFVSFATMLIQRLEQVVSF. An ABC transporter domain is found at 345–579; that stretch reads VEFNDVSFSY…GGHFAQLAKA (235 aa). 378–385 serves as a coordination point for ATP; that stretch reads GPTGAGKS.

This sequence belongs to the ABC transporter superfamily. Beta-(1--&gt;2)glucan exporter (TC 3.A.1.108.1) family. Homodimer.

Its subcellular location is the cell inner membrane. It carries out the reaction [(1-&gt;2)-beta-D-glucosyl](n)(in) + ATP + H2O = [(1-&gt;2)-beta-D-glucosyl](n)(out) + ADP + phosphate + H(+). Involved in beta-(1--&gt;2)glucan export. Transmembrane domains (TMD) form a pore in the inner membrane and the ATP-binding domain (NBD) is responsible for energy generation. The sequence is that of Beta-(1--&gt;2)glucan export ATP-binding/permease protein NdvA from Nitrobacter winogradskyi (strain ATCC 25391 / DSM 10237 / CIP 104748 / NCIMB 11846 / Nb-255).